The chain runs to 245 residues: MANEAYPCPCDIGHRLEYGGLGREVQVEHIKAYVTKSPVDAGKAVIVIQDIFGWQLPNTRYIADMISGNGYTTIVPDFFVGQEPWDPSGDWSIFPEWLKTRNAQKIDREISAILKYLKQQCHAQKIGIVGFCWGGTAVHHLMMKYSEFRAGVSVYGIVKDSEDIYNLKNPTLFIFAENDVVIPLKDVSLLTQKLKEHCKVEYQIKTFSGQTHGFVHRKREDCSPADKPYIDEARRNLIEWLNKYM.

Ala2 carries the N-acetylalanine modification. Position 36 is an N6-acetyllysine (Lys36). Catalysis depends on residues Cys132, Asp179, and His212. At Ser223 the chain carries Phosphoserine.

This sequence belongs to the dienelactone hydrolase family. Widely expressed, with highest levels in liver, followed by kidney, small intestine and colon. Present in liver and intestine (at protein level).

Its subcellular location is the cytoplasm. The protein resides in the cytosol. Strongly inhibited by p-chloromercuribenzoate (PCMB). Partially inhibited by bis-p-nitrophenylphosphate (BNPP). Not inhibited by DFP, PMSF, eserine or EDTA. Cysteine hydrolase. Can convert the prodrug olmesartan medoxomil into its pharmacologically active metabolite olmerstatan, an angiotensin receptor blocker, in liver and intestine. May also activate beta-lactam antibiotics faropenem medoxomil and lenampicillin. The chain is Carboxymethylenebutenolidase homolog (CMBL) from Homo sapiens (Human).